The primary structure comprises 396 residues: Mannonate dehydratase (396 aa).

Belongs to the mannonate dehydratase family. Fe(2+) serves as cofactor. Requires Mn(2+) as cofactor.

It catalyses the reaction D-mannonate = 2-dehydro-3-deoxy-D-gluconate + H2O. It participates in carbohydrate metabolism; pentose and glucuronate interconversion. In terms of biological role, catalyzes the dehydration of D-mannonate. This is Mannonate dehydratase from Yersinia enterocolitica serotype O:8 / biotype 1B (strain NCTC 13174 / 8081).